Here is a 150-residue protein sequence, read N- to C-terminus: Interferon antagonist OPG027 (150 aa).

The protein belongs to the orthopoxvirus OPG027 family.

Functionally, inhibits antiviral activity induced by type I interferons. Does not block signal transduction of IFN, but is important to counteract the host antiviral state induced by a pre-treatment with IFN. This is Interferon antagonist OPG027 (OPG027) from Homo sapiens (Human).